A 751-amino-acid chain; its full sequence is Cyanobacterial phytochrome B (751 aa).

Cys17 contributes to the a tetrapyrrole binding site. Residues 22-511 form a chromophore binding domain region; that stretch reads IHIPGLIQPH…RSAIIGIVLQ (490 aa). Residues 152–320 form the GAF domain; it reads TTTEISQILA…MTSVEMSAKE (169 aa). Positions 536–751 constitute a Histidine kinase domain; the sequence is IASHDLKEPL…STFYFTLQDV (216 aa). His539 is modified (phosphohistidine; by autocatalysis).

In the N-terminal section; belongs to the phytochrome family. In terms of processing, contains one covalently linked tetrapyrrole chromophore.

The enzyme catalyses ATP + protein L-histidine = ADP + protein N-phospho-L-histidine.. Photoreceptor which exists in two forms that are reversibly interconvertible by light: the R form that absorbs maximally in the red region of the spectrum and the FR form that absorbs maximally in the far-red region. This chain is Cyanobacterial phytochrome B (bphB), found in Nostoc sp. (strain PCC 7120 / SAG 25.82 / UTEX 2576).